The following is a 1003-amino-acid chain: Methyl-CpG-binding domain protein 6 (1003 aa).

The 71-residue stretch at 11 to 81 folds into the MBD domain; it reads DRAGGPVATS…KVFNFDPLAP (71 aa). The required for interaction with ASXL1/2/3 stretch occupies residues 57–68; it reads DGTCKCGLECPL. Disordered stretches follow at residues 120 to 219, 238 to 664, and 683 to 1003; these read TCSH…PPPA, VPSD…PLLF, and ATLD…KLAP. 2 stretches are compositionally biased toward pro residues: residues 140-155 and 268-287; these read PGPP…PPTT and TPPP…PASQ. 3 stretches are compositionally biased toward low complexity: residues 297–308, 319–328, and 348–361; these read LPLVLGPLGGAP, LASSLLSAAA, and AQAP…SLRP. Positions 391–407 are enriched in pro residues; that stretch reads APAPVPQPFSLPEPSQP. A compositionally biased stretch (low complexity) spans 408 to 426; sequence ILPSVLSLLGLPTPGPSHS. Residues 439–456 are compositionally biased toward pro residues; sequence LPPPPTLSSGSPPQPRHP. Low complexity-rich tracts occupy residues 460-498 and 531-548; these read SLPG…PSEG and GAGF…LSLG. A compositionally biased stretch (pro residues) spans 570–589; sequence QPPPEPLLPPPGGPGPPLAP. The span at 590 to 602 shows a compositional bias: low complexity; the sequence is GEPEGPSLLVASL. The span at 603–617 shows a compositional bias: pro residues; sequence LPPPPSDLLPPPSAP. The span at 618–633 shows a compositional bias: low complexity; that stretch reads PSNLLASFLPLLALGP. The span at 635-649 shows a compositional bias: gly residues; that stretch reads AGDGEGSAEGAGGPS. Over residues 650–662 the composition is skewed to low complexity; sequence GEPFSGLGDLSPL. Over residues 707 to 718 the composition is skewed to polar residues; sequence TSSVTTATTDPG. Low complexity-rich tracts occupy residues 732-761, 768-778, and 788-798; these read PPQL…LPSL, LLSGQLGLQLL, and SEASSPLACLL. The segment covering 805–817 has biased composition (pro residues); the sequence is PEQPEAPCLPPES. Residues 818–837 are compositionally biased toward low complexity; that stretch reads PASALEPEPARPPLSALAPP. Residues 947 to 958 are compositionally biased toward basic residues; that stretch reads RKSRRGRRRKYN. Polar residues predominate over residues 959 to 969; sequence PTRNSNSSRQD. Basic residues predominate over residues 989 to 1003; the sequence is RPGRPAKNKRRKLAP.

In terms of assembly, core component of the polycomb repressive deubiquitinase (PR-DUB) complex, at least composed of BAP1, one of ASXL1, ASXL2 or (probably) ASXL3, and one of MBD5 or MBD6. Distinct combinations of ASXL and MBD proteins may preferentially bind specific histone modification marks. The PR-DUB core associates with a number of accessory proteins, including FOXK1, FOXK2, KDM1B, HCFC1 and OGT; KDM1B specifically associates with ASXL2 PR-DUB complexes. Interacts (via MBD domain) with ASXL1, ASXL2 and ASXL3 (via PHD domain); the interaction is probably direct, mediates association with other PR-DUB complex core components.

The protein localises to the nucleus. Its subcellular location is the chromosome. Functionally, non-catalytic component of the polycomb repressive deubiquitinase (PR-DUB) complex, a complex that specifically mediates deubiquitination of histone H2A monoubiquitinated at 'Lys-120' (H2AK119ub1). Important for stability of PR-DUB components and stimulating its ubiquitinase activity. As part of the PR-DUB complex, associates with chromatin enriched in histone marks H3K4me1, H3K4me3, and H3K27Ac, but not in H3K27me3. MBD5 and MBD6 containing complexes associate with distinct chromatin regions enriched in genes involved in different pathways. Heterochromatin recruitment is not mediated by DNA methylation. The PR-DUB complex is an epigenetic regulator of gene expression, including genes involved in development, cell communication, signaling, cell proliferation and cell viability; may promote cancer cell growth. The protein is Methyl-CpG-binding domain protein 6 (MBD6) of Homo sapiens (Human).